The sequence spans 28 residues: Conotoxin Cl1.2 (28 aa).

Post-translationally, contains 2 disulfide bonds. As to expression, expressed by the venom duct.

It localises to the secreted. In Californiconus californicus (California cone), this protein is Conotoxin Cl1.2.